The chain runs to 55 residues: Major pollen allergen Dac g 4 (55 aa).

In Dactylis glomerata (Orchard grass), this protein is Major pollen allergen Dac g 4.